The chain runs to 1199 residues: DNA-directed RNA polymerase subunit beta' (1199 aa).

Zn(2+)-binding residues include C60, C62, C75, and C78. Mg(2+) is bound by residues D449, D451, and D453. Zn(2+)-binding residues include C818, C892, C899, and C902.

This sequence belongs to the RNA polymerase beta' chain family. In terms of assembly, RNAP is composed of a core of 2 alpha, a beta and a beta' subunit. The core is associated with a delta subunit, and at least one of epsilon or omega. When a sigma factor is associated with the core the holoenzyme is formed, which can initiate transcription. Requires Mg(2+) as cofactor. Zn(2+) is required as a cofactor.

It catalyses the reaction RNA(n) + a ribonucleoside 5'-triphosphate = RNA(n+1) + diphosphate. In terms of biological role, DNA-dependent RNA polymerase catalyzes the transcription of DNA into RNA using the four ribonucleoside triphosphates as substrates. The sequence is that of DNA-directed RNA polymerase subunit beta' from Bacillus subtilis (strain 168).